A 365-amino-acid chain; its full sequence is Terpene cyclase 4 (365 aa).

Positions 1-11 (MVPSLITPPPS) are enriched in pro residues. The disordered stretch occupies residues 1–20 (MVPSLITPPPSRSGEATPQK). Asp-118, Asn-260, and Ser-264 together coordinate Mg(2+). The D(D/E)XX(D/E) motif motif lies at 118 to 122 (DDPFD). An NSE motif motif is present at residues 260-268 (NDLCSYRKD). Positions 341–348 (WSLYTFRY) match the WxxxxxRY motif motif. (2E,6E)-farnesyl diphosphate is bound by residues Arg-347 and Tyr-348.

It belongs to the terpene synthase family. Homodimer. It depends on Mg(2+) as a cofactor.

It catalyses the reaction (2E,6E)-farnesyl diphosphate + H2O = koraiol + diphosphate. It functions in the pathway sesquiterpene biosynthesis. Terpene cyclase that catalyzes the cyclization of farnesyl diphosphate (FPP) to the sesquiterpene koraiol. The polypeptide is Terpene cyclase 4 (Gibberella fujikuroi (strain CBS 195.34 / IMI 58289 / NRRL A-6831) (Bakanae and foot rot disease fungus)).